Consider the following 754-residue polypeptide: Phosphoinositide 3-kinase regulatory subunit 6 (754 aa).

The tract at residues 343 to 363 (ERDLPTGADELPAPGSPEMER) is disordered.

Heterodimer of a catalytic subunit (PIK3CG) and a regulatory (PIK3R6) subunit. The binding of PIK3R6 to PIK3CG may exclude the binding of PIK3R5 to PIK3CG. Interacts with beta-gamma G protein dimers. Interacts with PDE3B and RAPGEF3; form a signaling complex that regulates phosphatidylinositol 3-kinase gamma in angiogenesis.

It localises to the cytoplasm. The protein resides in the cell membrane. In terms of biological role, regulatory subunit of the PI3K gamma complex. Acts as an adapter to drive activation of PIK3CG by beta-gamma G protein dimers. The PIK3CG:PIK3R6 heterodimer is much less sensitive to beta-gamma G protein dimers than PIK3CG:PIK3R5 and its membrane recruitment and beta-gamma G protein dimer-dependent activation requires HRAS bound to PIK3CG. Recruits of the PI3K gamma complex to a PDE3B:RAPGEF3 signaling complex involved in angiogenesis; signaling seems to involve RRAS. This Homo sapiens (Human) protein is Phosphoinositide 3-kinase regulatory subunit 6 (PIK3R6).